Reading from the N-terminus, the 1203-residue chain is Nitric oxide synthase 3 (1203 aa).

The tract at residues 1–71 is disordered; that stretch reads MGNLKSVAQE…PPEGPKFPRV (71 aa). Gly-2 is lipidated: N-myristoyl glycine. 2 S-palmitoyl cysteine lipidation sites follow: Cys-15 and Cys-26. The segment covering 15–27 has biased composition (gly residues); the sequence is CGLGLGLGLGLCG. Thr-33 is modified (phosphothreonine). Over residues 33-66 the composition is skewed to pro residues; the sequence is TPAPEPSRAPASLLPPAPEHSPPSSPLTQPPEGP. Residues Cys-94 and Cys-99 each contribute to the Zn(2+) site. Positions 98–486 are interaction with NOSIP; it reads RCLGSLVFPR…PDPWKGSAAK (389 aa). Ser-102 provides a ligand contact to (6R)-L-erythro-5,6,7,8-tetrahydrobiopterin. Ser-114 is subject to Phosphoserine; by CDK5. Cys-184 is a binding site for heme b. Residues Gln-247, Trp-356, Tyr-357, and Glu-361 each contribute to the L-arginine site. Arg-365 serves as a coordination point for (6R)-L-erythro-5,6,7,8-tetrahydrobiopterin. Asn-366 serves as a coordination point for L-arginine. Ala-446, Trp-447, and Phe-460 together coordinate (6R)-L-erythro-5,6,7,8-tetrahydrobiopterin. Residue Tyr-475 coordinates heme b. The tract at residues 491–510 is calmodulin-binding; it reads TRKKTFKEVANAVKISASLM. Thr-495 is subject to Phosphothreonine; by AMPK. The Flavodoxin-like domain occupies 520–703; sequence ATILYGSETG…AFRGWAQAAF (184 aa). FMN contacts are provided by Ser-526, Glu-527, Thr-528, Arg-530, Ser-572, and Thr-573. Ser-615, Ser-633, and Ser-638 each carry phosphoserine. FMN contacts are provided by Ser-654, Cys-661, Glu-687, and Gln-691. Residues 756 to 1002 form the FAD-binding FR-type domain; it reads RKMFQATIRS…IRGAPSFRLP (247 aa). Arg-776 serves as a coordination point for NADP(+). His-798 contacts FAD. Position 836 is a phosphoserine (Ser-836). FAD-binding residues include Arg-938, Tyr-940, Ser-941, Thr-956, Ala-958, Tyr-962, Val-975, Cys-976, and Ser-977. Residues Thr-1016, Arg-1049, Ser-1078, Arg-1079, Lys-1085, Tyr-1087, and Gln-1089 each coordinate NADP(+). Thr-1175 is modified (phosphothreonine). At Ser-1177 the chain carries Phosphoserine; by AMPK. At Ser-1179 the chain carries Phosphoserine.

It belongs to the NOS family. As to quaternary structure, homodimer. Interacts with NOSIP and NOSTRIN. Interacts with HSP90AB1. Forms a complex with ASL, ASS1 and SLC7A1; the complex regulates cell-autonomous L-arginine synthesis and citrulline recycling while channeling extracellular L-arginine to nitric oxide synthesis pathway. Requires heme b as cofactor. FAD serves as cofactor. FMN is required as a cofactor. The cofactor is (6R)-L-erythro-5,6,7,8-tetrahydrobiopterin. Post-translationally, phosphorylation by AMPK at Ser-1177 in the presence of Ca(2+)-calmodulin (CaM) activates activity. In absence of Ca(2+)-calmodulin, AMPK also phosphorylates Thr-495, resulting in inhibition of activity. Phosphorylation of Ser-114 by CDK5 reduces activity. Platelets, placenta, liver and kidney.

Its subcellular location is the cell membrane. The protein resides in the membrane. It localises to the caveola. It is found in the cytoplasm. The protein localises to the cytoskeleton. Its subcellular location is the golgi apparatus. The catalysed reaction is 2 L-arginine + 3 NADPH + 4 O2 + H(+) = 2 L-citrulline + 2 nitric oxide + 3 NADP(+) + 4 H2O. Stimulated by calcium/calmodulin. Inhibited by NOSIP and NOSTRIN. Functionally, produces nitric oxide (NO) which is implicated in vascular smooth muscle relaxation through a cGMP-mediated signal transduction pathway. NO mediates vascular endothelial growth factor (VEGF)-induced angiogenesis in coronary vessels and promotes blood clotting through the activation of platelets. Its function is as follows. Lacks eNOS activity, dominant-negative form that may down-regulate eNOS activity by forming heterodimers with isoform 1. In Homo sapiens (Human), this protein is Nitric oxide synthase 3.